The sequence spans 732 residues: Kell blood group glycoprotein (732 aa).

The tract at residues 1-37 (MEGGDQSEEEPRERSQAGGMGTLWSQESTPEERLPVE) is disordered. Topologically, residues 1–47 (MEGGDQSEEEPRERSQAGGMGTLWSQESTPEERLPVEGSRPWAVARR) are cytoplasmic. The residue at position 7 (Ser-7) is a Phosphoserine. A helical; Signal-anchor for type II membrane protein membrane pass occupies residues 48–67 (VLTAILILGLLLCFSVLLFY). Residues 68–732 (NFQNCGPRPC…LNPSSRCQLW (665 aa)) are Extracellular-facing. The Peptidase M13 domain occupies 76–732 (PCETSVCLDL…LNPSSRCQLW (657 aa)). Cys-77 and Cys-82 are disulfide-bonded. Asn-94 and Asn-115 each carry an N-linked (GlcNAc...) asparagine glycan. 4 cysteine pairs are disulfide-bonded: Cys-100/Cys-717, Cys-108/Cys-682, Cys-155/Cys-410, and Cys-610/Cys-729. Residue Asn-191 is glycosylated (N-linked (GlcNAc...) asparagine; in KEL2 antigen). Asn-345 is a glycosylation site (N-linked (GlcNAc...) asparagine). His-581 provides a ligand contact to Zn(2+). The active site involves Glu-582. Residue His-585 coordinates Zn(2+). An N-linked (GlcNAc...) asparagine glycan is attached at Asn-627. Glu-634 is a binding site for Zn(2+). The Proton donor role is filled by Asp-638. The segment at 684 to 703 (KPSPQDSHDTHSPPHLRVHG) is disordered.

The protein belongs to the peptidase M13 family. As to quaternary structure, heterodimer with XK; disulfide-linked. Requires Zn(2+) as cofactor. Post-translationally, N-glycosylated. As to expression, expressed at high levels in erythrocytes and testis (in Sertoli cells), and, at lower levels, in skeletal muscle, tonsils (in follicular dendritic cells), lymph node, spleen and appendix (at protein level). Also expressed in many adult and fetal nonerythroid tissues, including brain, spleen, lymph nodes and bone marrow.

The protein localises to the cell membrane. In terms of biological role, zinc endopeptidase with endothelin-3-converting enzyme activity. Cleaves EDN1, EDN2 and EDN3, with a marked preference for EDN3. This is Kell blood group glycoprotein (KEL) from Homo sapiens (Human).